Consider the following 178-residue polypeptide: Redox-sensing transcriptional repressor Rex (178 aa).

59–64 is an NAD(+) binding site; that stretch reads GVGNMG.

Belongs to the transcriptional regulatory Rex family. As to quaternary structure, homodimer.

The protein resides in the cytoplasm. Functionally, modulates transcription in response to changes in cellular NADH/NAD(+) redox state. The polypeptide is Redox-sensing transcriptional repressor Rex (Streptococcus suis).